Consider the following 259-residue polypeptide: Proteasome subunit beta type-4 (259 aa).

It belongs to the peptidase T1B family. The 26S proteasome consists of a 20S proteasome core and two 19S regulatory subunits. The 20S proteasome core is composed of 28 subunits that are arranged in four stacked rings, resulting in a barrel-shaped structure. The two end rings are each formed by seven alpha subunits, and the two central rings are each formed by seven beta subunits. The catalytic chamber with the active sites is on the inside of the barrel.

It is found in the cytoplasm. The protein localises to the nucleus. Functionally, non-catalytic component of the proteasome, a multicatalytic proteinase complex which is characterized by its ability to cleave peptides with Arg, Phe, Tyr, Leu, and Glu adjacent to the leaving group at neutral or slightly basic pH. The proteasome has an ATP-dependent proteolytic activity. The chain is Proteasome subunit beta type-4 (psmB4-1) from Dictyostelium discoideum (Social amoeba).